Here is a 423-residue protein sequence, read N- to C-terminus: Probable sucrose-phosphate synthase (423 aa).

Belongs to the glycosyltransferase 1 family.

It carries out the reaction beta-D-fructose 6-phosphate + UDP-alpha-D-glucose = sucrose 6(F)-phosphate + UDP + H(+). Its function is as follows. Plays a role in sucrose synthesis by catalyzing the first step of sucrose biosynthesis from UDP-glucose and fructose-6-phosphate. The polypeptide is Probable sucrose-phosphate synthase (Thermosipho melanesiensis (strain DSM 12029 / CIP 104789 / BI429)).